The sequence spans 233 residues: Triosephosphate isomerase (233 aa).

8-10 (NWK) is a binding site for substrate. Catalysis depends on H91, which acts as the Electrophile. Residue E155 is the Proton acceptor of the active site. Substrate-binding residues include G161 and S192.

This sequence belongs to the triosephosphate isomerase family. As to quaternary structure, homodimer.

The protein resides in the cytoplasm. It catalyses the reaction D-glyceraldehyde 3-phosphate = dihydroxyacetone phosphate. The protein operates within carbohydrate biosynthesis; gluconeogenesis. It participates in carbohydrate degradation; glycolysis; D-glyceraldehyde 3-phosphate from glycerone phosphate: step 1/1. Involved in the gluconeogenesis. Catalyzes stereospecifically the conversion of dihydroxyacetone phosphate (DHAP) to D-glyceraldehyde-3-phosphate (G3P). The polypeptide is Triosephosphate isomerase (Wolbachia sp. subsp. Brugia malayi (strain TRS)).